The chain runs to 517 residues: Protein MGF 505-2R (517 aa).

Belongs to the asfivirus MGF 505 family.

Its function is as follows. Plays a role in virus cell tropism, and may be required for efficient virus replication in macrophages. The polypeptide is Protein MGF 505-2R (African swine fever virus (isolate Warthog/Namibia/Wart80/1980) (ASFV)).